The chain runs to 320 residues: L-lactate dehydrogenase 2 (320 aa).

NAD(+)-binding residues include Val-16, Asp-37, Lys-42, and Tyr-69. Arg-94 provides a ligand contact to substrate. Residues Ser-107, 124–126 (VTN), and Thr-149 each bind NAD(+). Substrate is bound at residue 126–129 (NPVD). Position 154 to 157 (154 to 157 (DTAR)) interacts with substrate. 2 residues coordinate beta-D-fructose 1,6-bisphosphate: Arg-159 and His-174. Catalysis depends on His-181, which acts as the Proton acceptor. Position 235 (Thr-235) interacts with substrate.

This sequence belongs to the LDH/MDH superfamily. LDH family. Homotetramer.

Its subcellular location is the cytoplasm. It catalyses the reaction (S)-lactate + NAD(+) = pyruvate + NADH + H(+). It functions in the pathway fermentation; pyruvate fermentation to lactate; (S)-lactate from pyruvate: step 1/1. With respect to regulation, allosterically activated by fructose 1,6-bisphosphate (FBP). Catalyzes the conversion of lactate to pyruvate. In Clostridium acetobutylicum (strain ATCC 824 / DSM 792 / JCM 1419 / IAM 19013 / LMG 5710 / NBRC 13948 / NRRL B-527 / VKM B-1787 / 2291 / W), this protein is L-lactate dehydrogenase 2.